Reading from the N-terminus, the 836-residue chain is Outer membrane usher protein PapC (836 aa).

The first 24 residues, 1–24 (MKDRIPFAVNNITCVILLSLFCNA), serve as a signal peptide directing secretion. Residues Cys-814 and Cys-832 are joined by a disulfide bond.

Belongs to the fimbrial export usher family.

Its subcellular location is the cell outer membrane. Functionally, involved in the export and assembly of pili subunits across the outer membrane. Forms a hexameric ring-shaped pore in the outer bacterial membrane. The 2 nanometer-diameter pore allows the passage of the thin tip fibrillum. As for the rod, it probably unwinds into linear fibers which would therefore be narrow enough to pass through the pore. This Escherichia coli protein is Outer membrane usher protein PapC (papC).